Reading from the N-terminus, the 158-residue chain is Cyclic pyranopterin monophosphate synthase (158 aa).

Residues 75–77 (LCH) and 113–114 (ME) contribute to the substrate site. Residue Asp128 is part of the active site.

The protein belongs to the MoaC family. Homohexamer; trimer of dimers.

It catalyses the reaction (8S)-3',8-cyclo-7,8-dihydroguanosine 5'-triphosphate = cyclic pyranopterin phosphate + diphosphate. Its pathway is cofactor biosynthesis; molybdopterin biosynthesis. Its function is as follows. Catalyzes the conversion of (8S)-3',8-cyclo-7,8-dihydroguanosine 5'-triphosphate to cyclic pyranopterin monophosphate (cPMP). This chain is Cyclic pyranopterin monophosphate synthase, found in Roseiflexus castenholzii (strain DSM 13941 / HLO8).